We begin with the raw amino-acid sequence, 313 residues long: Protoheme IX farnesyltransferase (313 aa).

8 helical membrane passes run 32–52, 53–73, 120–140, 153–173, 180–200, 226–246, 248–268, and 284–304; these read VMSL…GDFH, PVLA…AGAL, VLVN…YVVI, IVIG…AVTG, LLLF…LALF, ILLY…LGYF, AVYG…AIRV, and LFKF…IEVV.

The protein belongs to the UbiA prenyltransferase family. Protoheme IX farnesyltransferase subfamily.

It is found in the cell inner membrane. The enzyme catalyses heme b + (2E,6E)-farnesyl diphosphate + H2O = Fe(II)-heme o + diphosphate. Its pathway is porphyrin-containing compound metabolism; heme O biosynthesis; heme O from protoheme: step 1/1. Functionally, converts heme B (protoheme IX) to heme O by substitution of the vinyl group on carbon 2 of heme B porphyrin ring with a hydroxyethyl farnesyl side group. The chain is Protoheme IX farnesyltransferase from Rhodopseudomonas palustris (strain BisB5).